We begin with the raw amino-acid sequence, 194 residues long: Fibroblast growth factor 7 (194 aa).

The N-terminal stretch at M1–A31 is a signal peptide. N-linked (GlcNAc...) asparagine glycosylation occurs at N45.

It belongs to the heparin-binding growth factors family. Interacts with FGFBP1. Interacts with FGFR2. Affinity between fibroblast growth factors (FGFs) and their receptors is increased by heparan sulfate glycosaminoglycans that function as coreceptors.

Its subcellular location is the secreted. Its function is as follows. Plays an important role in the regulation of embryonic development, cell proliferation and cell differentiation. Required for normal branching morphogenesis. Growth factor active on keratinocytes. Possible major paracrine effector of normal epithelial cell proliferation. This Cervus elaphus (Red deer) protein is Fibroblast growth factor 7 (FGF7).